The sequence spans 51 residues: Defensin-like protein 2A (51 aa).

Pyrrolidone carboxylic acid is present on Gln-1. Cystine bridges form between Cys-4–Cys-51, Cys-15–Cys-36, Cys-21–Cys-45, and Cys-25–Cys-47. Phosphoserine; by CPK is present on Ser-8.

Forms oligomers in its native state.

In terms of biological role, possesses antifungal activity sensitive to inorganic cations. This is Defensin-like protein 2A from Sinapis alba (White mustard).